The sequence spans 488 residues: Centrosomal protein cep57l1 (488 aa).

Residues 71–226 (LESEKTHARD…AQVQTSLEVN (156 aa)) are a coiled coil. Disordered regions lie at residues 232 to 272 (SASS…PPSK) and 311 to 342 (PRVSQKDPKTVEHKPSILPGGSRSIPTRLMSS). A compositionally biased stretch (basic residues) spans 241-250 (RKVKKKKQSK). 2 stretches are compositionally biased toward basic and acidic residues: residues 259-270 (PSSKEPLSKEPP) and 314-325 (SQKDPKTVEHKP). A coiled-coil region spans residues 377–403 (KNTDMREDLERELDYLVKQMEIKSDQI). Residues 416-464 (LKKTAKKQPRPPSTTKPAEDEQNIGATDPCTPRNKGNLANGTGTPNSKA) form a disordered region. Over residues 452 to 464 (NLANGTGTPNSKA) the composition is skewed to polar residues.

The protein belongs to the translokin family. As to quaternary structure, interacts with clip1, mis12, ndc80 and zwint. Interacts with gamma-tubulin.

Its subcellular location is the cytoplasm. It localises to the cytoskeleton. The protein localises to the microtubule organizing center. It is found in the centrosome. The protein resides in the chromosome. Its subcellular location is the centromere. It localises to the kinetochore. The protein localises to the spindle. In terms of biological role, required for spindle microtubule attachment to both kinetochores and centrosomes. Also functions to tether minus-ends of spindle microtubules to centrosomes. May act by forming ring-like structures around microtubules, or by serving as a cross-linker or scaffold at the attachment site. This chain is Centrosomal protein cep57l1 (cep57l1), found in Xenopus laevis (African clawed frog).